The following is a 154-amino-acid chain: Lipoprotein signal peptidase (154 aa).

The next 3 helical transmembrane spans lie at 4–24 (IIIP…KLWI), 62–82 (LFTL…MKHI), and 84–104 (GSYW…GNFI). Residues Asp114 and Asp130 contribute to the active site. The chain crosses the membrane as a helical span at residues 125–145 (IFNVADSYLTIGIICLMIALW).

This sequence belongs to the peptidase A8 family.

It is found in the cell membrane. It carries out the reaction Release of signal peptides from bacterial membrane prolipoproteins. Hydrolyzes -Xaa-Yaa-Zaa-|-(S,diacylglyceryl)Cys-, in which Xaa is hydrophobic (preferably Leu), and Yaa (Ala or Ser) and Zaa (Gly or Ala) have small, neutral side chains.. The protein operates within protein modification; lipoprotein biosynthesis (signal peptide cleavage). Its function is as follows. This protein specifically catalyzes the removal of signal peptides from prolipoproteins. This is Lipoprotein signal peptidase from Streptococcus agalactiae serotype Ia (strain ATCC 27591 / A909 / CDC SS700).